A 92-amino-acid chain; its full sequence is Small ribosomal subunit protein uS19c (92 aa).

The protein belongs to the universal ribosomal protein uS19 family.

The protein localises to the plastid. It is found in the chloroplast. Protein S19 forms a complex with S13 that binds strongly to the 16S ribosomal RNA. The sequence is that of Small ribosomal subunit protein uS19c from Lemna minor (Common duckweed).